A 320-amino-acid chain; its full sequence is Phosphatidylserine decarboxylase proenzyme (320 aa).

Active-site charge relay system; for autoendoproteolytic cleavage activity residues include D90, H147, and S254. S254 acts as the Schiff-base intermediate with substrate; via pyruvic acid; for decarboxylase activity in catalysis. A Pyruvic acid (Ser); by autocatalysis modification is found at S254. A disordered region spans residues 290 to 320; it reads TAAAEPAPLPEEEIRAEHRASPLVDDKQDQG. The segment covering 301-320 has biased composition (basic and acidic residues); that stretch reads EEIRAEHRASPLVDDKQDQG.

This sequence belongs to the phosphatidylserine decarboxylase family. PSD-B subfamily. Prokaryotic type I sub-subfamily. In terms of assembly, heterodimer of a large membrane-associated beta subunit and a small pyruvoyl-containing alpha subunit. Pyruvate is required as a cofactor. In terms of processing, is synthesized initially as an inactive proenzyme. Formation of the active enzyme involves a self-maturation process in which the active site pyruvoyl group is generated from an internal serine residue via an autocatalytic post-translational modification. Two non-identical subunits are generated from the proenzyme in this reaction, and the pyruvate is formed at the N-terminus of the alpha chain, which is derived from the carboxyl end of the proenzyme. The autoendoproteolytic cleavage occurs by a canonical serine protease mechanism, in which the side chain hydroxyl group of the serine supplies its oxygen atom to form the C-terminus of the beta chain, while the remainder of the serine residue undergoes an oxidative deamination to produce ammonia and the pyruvoyl prosthetic group on the alpha chain. During this reaction, the Ser that is part of the protease active site of the proenzyme becomes the pyruvoyl prosthetic group, which constitutes an essential element of the active site of the mature decarboxylase.

The protein localises to the cell membrane. It catalyses the reaction a 1,2-diacyl-sn-glycero-3-phospho-L-serine + H(+) = a 1,2-diacyl-sn-glycero-3-phosphoethanolamine + CO2. It functions in the pathway phospholipid metabolism; phosphatidylethanolamine biosynthesis; phosphatidylethanolamine from CDP-diacylglycerol: step 2/2. Its function is as follows. Catalyzes the formation of phosphatidylethanolamine (PtdEtn) from phosphatidylserine (PtdSer). The sequence is that of Phosphatidylserine decarboxylase proenzyme from Klebsiella pneumoniae subsp. pneumoniae (strain ATCC 700721 / MGH 78578).